Here is a 910-residue protein sequence, read N- to C-terminus: ZZ-type zinc finger-containing protein 3 (910 aa).

Disordered stretches follow at residues 41–117 (AHPE…RQAE) and 133–153 (EATN…PGEH). Polar residues predominate over residues 67-84 (QKGTNNGRTSDVRQQSAR). Residues S89, S96, S137, S138, and S142 each carry the phosphoserine modification. Positions 96 to 116 (SSSEKDDLERQALESCERRQA) are enriched in basic and acidic residues. Over residues 142 to 153 (SPVKPDKEPGEH) the composition is skewed to basic and acidic residues. A Glycyl lysine isopeptide (Lys-Gly) (interchain with G-Cter in SUMO2) cross-link involves residue K283. 3 disordered regions span residues 303–358 (TAES…VSGE), 373–444 (TSLS…PQDG), and 609–641 (ARPK…SHNR). Composition is skewed to polar residues over residues 331 to 347 (SSAS…NPLD) and 397 to 434 (SSPT…SESP). An N6-acetyllysine modification is found at K401. Phosphoserine is present on S613. Basic and acidic residues predominate over residues 613–622 (SPLDPKKDGE). K654 participates in a covalent cross-link: Glycyl lysine isopeptide (Lys-Gly) (interchain with G-Cter in SUMO2). One can recognise an HTH myb-type domain in the interval 654-714 (KPETFNQLWT…RVQKYFIKLT (61 aa)). The segment at residues 687 to 710 (WQKIADELGNRTAKQVASRVQKYF) is a DNA-binding region (H-T-H motif). The residue at position 708 (K708) is an N6-acetyllysine. Residue K715 forms a Glycyl lysine isopeptide (Lys-Gly) (interchain with G-Cter in SUMO2) linkage. The segment at 825–884 (HVGFKCDNCGVEPIQGVRWHCQDCPPEMSLDFCDSCSDCPHETDIHKEDHQLEPVYKSET) adopts a ZZ-type zinc-finger fold. C830, C833, C845, C848, C857, C860, H870, and H874 together coordinate Zn(2+).

In terms of assembly, component of the ADA2A-containing complex (ATAC), composed of KAT14, KAT2A, TADA2L, TADA3L, ZZ3, MBIP, WDR5, YEATS2, CCDC101 and DR1. Interacts via (ZZ-type zinc finger) with histone H3 in a methylation-independent manner and acetylation on 'Lys-4' (H3K4ac) moderately enhances the interaction.

It is found in the nucleus. Its function is as follows. Histone H3 reader that is required for the ATAC complex-mediated maintenance of histone acetylation and gene activation. Component of the ATAC complex, a complex with histone acetyltransferase activity on histones H3 and H4. The protein is ZZ-type zinc finger-containing protein 3 (Zzz3) of Mus musculus (Mouse).